The primary structure comprises 42 residues: Iota-conotoxin-like R11.15 (42 aa).

4 disulfide bridges follow: C5–C19, C12–C22, C18–C27, and C21–C36.

Belongs to the conotoxin I1 superfamily. As to expression, expressed by the venom duct.

The protein resides in the secreted. Its function is as follows. Iota-conotoxins bind to voltage-gated sodium channels (Nav) and act as agonists by shifting the voltage-dependence of activation to more hyperpolarized levels. Produces general excitatory symptoms. The polypeptide is Iota-conotoxin-like R11.15 (Conus radiatus (Rayed cone)).